The sequence spans 391 residues: Beta sliding clamp (391 aa).

This sequence belongs to the beta sliding clamp family. In terms of assembly, forms a ring-shaped head-to-tail homodimer around DNA which binds and tethers DNA polymerases and other proteins to the DNA. The DNA replisome complex has a single clamp-loading complex (3 tau and 1 each of delta, delta', psi and chi subunits) which binds 3 Pol III cores (1 core on the leading strand and 2 on the lagging strand) each with a beta sliding clamp dimer. Additional proteins in the replisome are other copies of gamma, psi and chi, Ssb, DNA helicase and RNA primase.

The protein resides in the cytoplasm. Confers DNA tethering and processivity to DNA polymerases and other proteins. Acts as a clamp, forming a ring around DNA (a reaction catalyzed by the clamp-loading complex) which diffuses in an ATP-independent manner freely and bidirectionally along dsDNA. Initially characterized for its ability to contact the catalytic subunit of DNA polymerase III (Pol III), a complex, multichain enzyme responsible for most of the replicative synthesis in bacteria; Pol III exhibits 3'-5' exonuclease proofreading activity. The beta chain is required for initiation of replication as well as for processivity of DNA replication. The sequence is that of Beta sliding clamp (dnaN) from Synechocystis sp. (strain ATCC 27184 / PCC 6803 / Kazusa).